The following is an 862-amino-acid chain: MCSGVSPVEQVAAGDMDDTAARFCVQKHSWDGLRSIIHGSRKSSGLIVSKAPHDFQFVQKPDESGPHSHRLYYLGMPYGSRENSLLYSEIPKKVRKEALLLLSWKQMLDHFQATPHHGVYSREEELLRERKRLGVFGITSYDFHSESGLFLFQASNSLFHCRDGGKNGFMVSPMKPLEIKTQCSGPRMDPKICPADPAFFSFINNSDLWVANIETGEERRLTFCHQGSAGVLDNPKSAGVATFVIQEEFDRFTGCWWCPTASWEGSEGLKTLRILYEEVDESEVEVIHVPSPALEERKTDSYRYPRTGSKNPKIALKLAELQTDHQGKIVSSCEKELVQPFSSLFPKVEYIARAGWTRDGKYAWAMFLDRPQQRLQLVLLPPALFIPAVESEAQRQAAARAVPKNVQPFVIYEEVTNVWINVHDIFHPFPQAEGQQDFCFLRANECKTGFCHLYRVTVELKTKDYDWTEPLSPTEDEFKCPIKEEVALTSGEWEVLSRHGSKIWVNEQTKLVYFQGTKDTPLEHHLYVVSYESAGEIVRLTTLGFSHSCSMSQSFDMFVSHYSSVSTPPCVHVYKLSGPDDDPLHKQPRFWASMMEAANCPPDYVPPEIFHFHTRADVQLYGMIYKPHTLQPGRKHPTVLFVYGGPQVQLVNNSFKGIKYLRLNTLASLGYAVVVIDGRGSCQRGLHFEGALKNQMGQVEIEDQVEGLQYVAEKYGFIDLSRVAIHGWSYGGFLSLMGLIHKPQVFKVAIAGAPVTVWMAYDTGYTERYMDVPENNQQGYEAGSVALHVEKLPNEPNRLLILHGFLDENVHFFHTNFLVSQLIRAGKPYQLQIYPNERHSIRCRESGEHYEVTLLHFLQEHL.

Active-site charge relay system residues include Ser-729, Asp-807, and His-839. Ser-729 serves as a coordination point for Val-boroPro.

The protein belongs to the peptidase S9B family. DPPIV subfamily. In terms of assembly, homodimer. Forms a ternary complex with NLRP1, composed of a DPP9 homodimer, one full-length NLRP1 protein, and one cleaved C-terminus of NLRP1 (NACHT, LRR and PYD domains-containing protein 1, C-terminus). Forms a ternary complex with CARD8, composed of a DPP9 homodimer, one full-length NLRP1 protein, and one cleaved C-terminus of CARD8 (Caspase recruitment domain-containing protein 8, C-terminus). In the ternary complex, only one subunit of the DPP9 homodimer is bound to NLRP1 or CARD8. As to expression, detected in kidney, skin, brain, thymus and liver (at protein level).

It is found in the cytoplasm. The protein localises to the cytosol. The enzyme catalyses Release of an N-terminal dipeptide, Xaa-Yaa-|-Zaa-, from a polypeptide, preferentially when Yaa is Pro, provided Zaa is neither Pro nor hydroxyproline.. With respect to regulation, inhibited by the serine proteinase inhibitor 4-(2-aminoethyl)benzenesulphonyl fluoride (AEBSF), and by di-isopropylfluorophosphate. Inhibited by Val-boroPro (Talabostat, PT-100), a non-selective inhibitor, which triggers pyroptosis in monocytes and macrophages. Val-boroPro inhibits activity by binding to the active site, mimicking a substrate-bound state, thereby displacing the C-terminal fragment of NLRP1, leading to activation of the NLRP1 inflammasome. In contrast, Val-boroPro does not directly displaces CARD8: it acts by promoting degradation of the N-terminal part of CARD8, leading to indirect disruption of the ternary complex. Dipeptidyl peptidase that cleaves off N-terminal dipeptides from proteins having a Pro or Ala residue at position 2. Acts as a key inhibitor of caspase-1-dependent monocyte and macrophage pyroptosis in resting cells by preventing activation of NLRP1 and CARD8. Sequesters the cleaved C-terminal part of NLRP1 and CARD8, which respectively constitute the active part of the NLRP1 and CARD8 inflammasomes, in a ternary complex, thereby preventing their oligomerization and activation. The dipeptidyl peptidase activity is required to suppress NLRP1 and CARD8; however, neither NLRP1 nor CARD8 are bona fide substrates of DPP9, suggesting the existence of substrate(s) required for NLRP1 and CARD8 inhibition. The chain is Dipeptidyl peptidase 9 from Mus musculus (Mouse).